Reading from the N-terminus, the 264-residue chain is Phosphonoacetaldehyde hydrolase (264 aa).

The active-site Nucleophile is the D9. Mg(2+) is bound by residues D9 and A11. K50 acts as the Schiff-base intermediate with substrate in catalysis. D183 lines the Mg(2+) pocket.

This sequence belongs to the HAD-like hydrolase superfamily. PhnX family. Homodimer. It depends on Mg(2+) as a cofactor.

It carries out the reaction phosphonoacetaldehyde + H2O = acetaldehyde + phosphate + H(+). Its function is as follows. Involved in phosphonate degradation. In Bacillus cereus (strain B4264), this protein is Phosphonoacetaldehyde hydrolase.